We begin with the raw amino-acid sequence, 83 residues long: uncharacterized protein (83 aa).

This is an uncharacterized protein from Thermoproteus tenax (TTV1).